We begin with the raw amino-acid sequence, 142 residues long: Large ribosomal subunit protein uL13 (142 aa).

Belongs to the universal ribosomal protein uL13 family. As to quaternary structure, part of the 50S ribosomal subunit.

Functionally, this protein is one of the early assembly proteins of the 50S ribosomal subunit, although it is not seen to bind rRNA by itself. It is important during the early stages of 50S assembly. The protein is Large ribosomal subunit protein uL13 of Psychromonas ingrahamii (strain DSM 17664 / CCUG 51855 / 37).